The sequence spans 223 residues: Guanylate kinase (223 aa).

The tract at residues 1–22 (MTADGGPDVRHGTRPEPSGDGR) is disordered. Basic and acidic residues predominate over residues 7 to 19 (PDVRHGTRPEPSG). In terms of domain architecture, Guanylate kinase-like spans 21–201 (GRVVVLSGPS…ACAELVSLLV (181 aa)). 28–35 (GPSAVGKS) contacts ATP. Positions 204-223 (APDRHDTSGRTGRQTTSHPD) are disordered. The span at 212-223 (GRTGRQTTSHPD) shows a compositional bias: polar residues.

This sequence belongs to the guanylate kinase family.

The protein localises to the cytoplasm. It catalyses the reaction GMP + ATP = GDP + ADP. Functionally, essential for recycling GMP and indirectly, cGMP. The polypeptide is Guanylate kinase (Mycolicibacterium paratuberculosis (strain ATCC BAA-968 / K-10) (Mycobacterium paratuberculosis)).